The chain runs to 507 residues: ATP synthase subunit alpha, chloroplastic (507 aa).

170 to 177 (GDRQTGKT) provides a ligand contact to ATP.

It belongs to the ATPase alpha/beta chains family. As to quaternary structure, F-type ATPases have 2 components, CF(1) - the catalytic core - and CF(0) - the membrane proton channel. CF(1) has five subunits: alpha(3), beta(3), gamma(1), delta(1), epsilon(1). CF(0) has four main subunits: a, b, b' and c.

The protein localises to the plastid. It is found in the chloroplast thylakoid membrane. The enzyme catalyses ATP + H2O + 4 H(+)(in) = ADP + phosphate + 5 H(+)(out). In terms of biological role, produces ATP from ADP in the presence of a proton gradient across the membrane. The alpha chain is a regulatory subunit. The sequence is that of ATP synthase subunit alpha, chloroplastic from Liriodendron tulipifera (Tuliptree).